Consider the following 185-residue polypeptide: Ribosome-recycling factor (185 aa).

Residues A138 to G185 are disordered.

This sequence belongs to the RRF family.

The protein resides in the cytoplasm. Responsible for the release of ribosomes from messenger RNA at the termination of protein biosynthesis. May increase the efficiency of translation by recycling ribosomes from one round of translation to another. The protein is Ribosome-recycling factor of Lactobacillus delbrueckii subsp. bulgaricus (strain ATCC 11842 / DSM 20081 / BCRC 10696 / JCM 1002 / NBRC 13953 / NCIMB 11778 / NCTC 12712 / WDCM 00102 / Lb 14).